The chain runs to 124 residues: Small ribosomal subunit protein uS13 (124 aa).

The tract at residues 95 to 124 (GLPVRGQRTKTNARTRKGPKRTIAGKKKAK) is disordered.

This sequence belongs to the universal ribosomal protein uS13 family. As to quaternary structure, part of the 30S ribosomal subunit. Forms a loose heterodimer with protein S19. Forms two bridges to the 50S subunit in the 70S ribosome.

Its function is as follows. Located at the top of the head of the 30S subunit, it contacts several helices of the 16S rRNA. In the 70S ribosome it contacts the 23S rRNA (bridge B1a) and protein L5 of the 50S subunit (bridge B1b), connecting the 2 subunits; these bridges are implicated in subunit movement. Contacts the tRNAs in the A and P-sites. The protein is Small ribosomal subunit protein uS13 of Rhodococcus jostii (strain RHA1).